A 320-amino-acid polypeptide reads, in one-letter code: Foldase protein PrsA (320 aa).

The first 20 residues, 1-20, serve as a signal peptide directing secretion; it reads MKMINKLIVPVTASALLLGA. A lipid anchor (N-palmitoyl cysteine) is attached at Cys-21. Cys-21 is lipidated: S-diacylglycerol cysteine. One can recognise a PpiC domain in the interval 139 to 245; sequence EDSKKASHIL…FGYHIIKADK (107 aa). Residues 159–198 form a disordered region; sequence EGLDDKEAKQKAEEIQKEVSKDPSKFGEIAKKESMDTGSA.

This sequence belongs to the PrsA family.

It is found in the cell membrane. It carries out the reaction [protein]-peptidylproline (omega=180) = [protein]-peptidylproline (omega=0). In terms of biological role, plays a major role in protein secretion by helping the post-translocational extracellular folding of several secreted proteins. This chain is Foldase protein PrsA, found in Staphylococcus aureus (strain MRSA252).